The following is a 616-amino-acid chain: Dihydroxy-acid dehydratase (616 aa).

Residue D81 participates in Mg(2+) binding. Position 122 (C122) interacts with [2Fe-2S] cluster. 2 residues coordinate Mg(2+): D123 and K124. At K124 the chain carries N6-carboxylysine. Position 195 (C195) interacts with [2Fe-2S] cluster. E491 provides a ligand contact to Mg(2+). S517 (proton acceptor) is an active-site residue.

It belongs to the IlvD/Edd family. In terms of assembly, homodimer. It depends on [2Fe-2S] cluster as a cofactor. Mg(2+) serves as cofactor.

The catalysed reaction is (2R)-2,3-dihydroxy-3-methylbutanoate = 3-methyl-2-oxobutanoate + H2O. It catalyses the reaction (2R,3R)-2,3-dihydroxy-3-methylpentanoate = (S)-3-methyl-2-oxopentanoate + H2O. Its pathway is amino-acid biosynthesis; L-isoleucine biosynthesis; L-isoleucine from 2-oxobutanoate: step 3/4. It functions in the pathway amino-acid biosynthesis; L-valine biosynthesis; L-valine from pyruvate: step 3/4. In terms of biological role, functions in the biosynthesis of branched-chain amino acids. Catalyzes the dehydration of (2R,3R)-2,3-dihydroxy-3-methylpentanoate (2,3-dihydroxy-3-methylvalerate) into 2-oxo-3-methylpentanoate (2-oxo-3-methylvalerate) and of (2R)-2,3-dihydroxy-3-methylbutanoate (2,3-dihydroxyisovalerate) into 2-oxo-3-methylbutanoate (2-oxoisovalerate), the penultimate precursor to L-isoleucine and L-valine, respectively. In Escherichia coli (strain K12 / MC4100 / BW2952), this protein is Dihydroxy-acid dehydratase.